A 443-amino-acid chain; its full sequence is Thymidine phosphorylase (443 aa).

The protein belongs to the thymidine/pyrimidine-nucleoside phosphorylase family. Homodimer.

The catalysed reaction is thymidine + phosphate = 2-deoxy-alpha-D-ribose 1-phosphate + thymine. Its pathway is pyrimidine metabolism; dTMP biosynthesis via salvage pathway; dTMP from thymine: step 1/2. In terms of biological role, the enzymes which catalyze the reversible phosphorolysis of pyrimidine nucleosides are involved in the degradation of these compounds and in their utilization as carbon and energy sources, or in the rescue of pyrimidine bases for nucleotide synthesis. This chain is Thymidine phosphorylase, found in Shewanella loihica (strain ATCC BAA-1088 / PV-4).